The chain runs to 292 residues: Elongation factor Ts (292 aa).

An involved in Mg(2+) ion dislocation from EF-Tu region spans residues 80–83 (TDFV).

The protein belongs to the EF-Ts family.

It is found in the cytoplasm. In terms of biological role, associates with the EF-Tu.GDP complex and induces the exchange of GDP to GTP. It remains bound to the aminoacyl-tRNA.EF-Tu.GTP complex up to the GTP hydrolysis stage on the ribosome. The sequence is that of Elongation factor Ts from Tolumonas auensis (strain DSM 9187 / NBRC 110442 / TA 4).